The following is a 211-amino-acid chain: Large ribosomal subunit protein uL4 (211 aa).

The segment at 40–80 (QQAHSRQGTASTLTRSEVRGGGRKPYKQKGTGRARQGSIRT) is disordered. Polar residues predominate over residues 41–54 (QAHSRQGTASTLTR). Basic residues predominate over residues 60–71 (GGRKPYKQKGTG).

Belongs to the universal ribosomal protein uL4 family. As to quaternary structure, part of the 50S ribosomal subunit.

In terms of biological role, one of the primary rRNA binding proteins, this protein initially binds near the 5'-end of the 23S rRNA. It is important during the early stages of 50S assembly. It makes multiple contacts with different domains of the 23S rRNA in the assembled 50S subunit and ribosome. Its function is as follows. Forms part of the polypeptide exit tunnel. This is Large ribosomal subunit protein uL4 from Prochlorococcus marinus (strain MIT 9211).